The following is a 325-amino-acid chain: MNMTKTAMLIALMTVMFMSIGYLLGGGGGMMIALVIAVAMNLFGYWNSDKMVLRMYNAQEVDERSAPEYYRMVSGLAANAGLPMPKVYIIHEDQPNAFATGRNPENAAVAATTGLLNWLSPEEVAGVMAHELAHVQNRDTLTMTIVATLAGAISMLGNFAFFLGGNRENGNGVMGVVGTLLAMIVAPFGAMIVQMAVSRTREYAADKRGAEICGNPLWLSSALGKIARGAKVIPNEEAEHNPATAHMFIINPLSGRGADNLFSTHPDTDNRIAALEQMAAETGIRSAAMTARAAAPSQNSGPWGQRSDNAGGNSNGGSRYRGPWS.

A helical transmembrane segment spans residues 20-40 (IGYLLGGGGGMMIALVIAVAM). His-130 contacts Zn(2+). Residue Glu-131 is part of the active site. His-134 contributes to the Zn(2+) binding site. Helical transmembrane passes span 145 to 165 (IVATLAGAISMLGNFAFFLGG) and 173 to 193 (VMGVVGTLLAMIVAPFGAMIV). Glu-202 is a binding site for Zn(2+). The interval 286 to 325 (SAAMTARAAAPSQNSGPWGQRSDNAGGNSNGGSRYRGPWS) is disordered. A compositionally biased stretch (low complexity) spans 306 to 325 (RSDNAGGNSNGGSRYRGPWS).

The protein belongs to the peptidase M48B family. Zn(2+) serves as cofactor.

The protein localises to the cell inner membrane. The polypeptide is Protease HtpX homolog (Brucella melitensis biotype 2 (strain ATCC 23457)).